A 665-amino-acid chain; its full sequence is Envelope glycoprotein (665 aa).

The signal sequence occupies residues 1-31; the sequence is MESTTLSKPFKNQVNPWGPLIVLLILGRVNP. The segment at 32-267 is receptor-binding domain (RBD); sequence VALGNSPHQV…KITDSGPRVP (236 aa). Over 32-605 the chain is Extracellular; the sequence is VALGNSPHQV…FNGSPWFTTL (574 aa). N43 carries an N-linked (GlcNAc...) asparagine; by host glycan. 5 disulfide bridges follow: C77–C129, C103–C118, C104–C114, C152–C172, and C164–C177. D117 provides a ligand contact to Zn(2+). N-linked (GlcNAc...) asparagine; by host glycosylation is found at N199 and N211. C209 and C215 are oxidised to a cystine. The disordered stretch occupies residues 266 to 307; that stretch reads VPIGPNPVLSDQRPPSQPRSPPHSNSTPTETPLTLPEPPPAG. N-linked (GlcNAc...) asparagine; by host glycosylation occurs at N324. 6 disulfide bridges follow: C334–C337, C334–C558, C364–C418, C383–C395, C425–C438, and C550–C557. The short motif at 334-337 is the CXXC element; sequence CWLC. N356 and N363 each carry an N-linked (GlcNAc...) asparagine; by host glycan. N-linked (GlcNAc...) asparagine; by host glycosylation is found at N396, N400, and N432. The tract at residues 470-490 is fusion peptide; that stretch reads VSLTLALLLGGLTMGGIAAGV. Positions 505–532 form a coiled coil; the sequence is AAVHDDLKEVEKSITNLEKSLTSLSEVV. The interval 533–549 is immunosuppression; sequence LQNRRGLDLLFLKEGGL. The short motif at 550–558 is the CX6CC element; it reads CAALKEECC. The chain crosses the membrane as a helical span at residues 606-626; that stretch reads ISTIMGPLIVLLLILLLGPCI. C625 carries the S-palmitoyl cysteine; by host lipid modification. Topologically, residues 627-665 are cytoplasmic; sequence LNRLVQFVKDRISVVQALVLTQQYHQLKSIDPEEMESRE. Positions 650-653 match the YXXL motif; contains endocytosis signal motif; that stretch reads YHQL.

As to quaternary structure, the mature envelope protein (Env) consists of a trimer of SU-TM heterodimers attached by a labile interchain disulfide bond. In terms of processing, specific enzymatic cleavages in vivo yield mature proteins. Envelope glycoproteins are synthesized as an inactive precursor that is N-glycosylated and processed likely by host cell furin or by a furin-like protease in the Golgi to yield the mature SU and TM proteins. The cleavage site between SU and TM requires the minimal sequence [KR]-X-[KR]-R. The R-peptide is released from the C-terminus of the cytoplasmic tail of the TM protein upon particle formation as a result of proteolytic cleavage by the viral protease. Cleavage of this peptide is required for TM to become fusogenic. Post-translationally, the CXXC motif is highly conserved across a broad range of retroviral envelope proteins. It is thought to participate in the formation of a labile disulfide bond possibly with the CX6CC motif present in the transmembrane protein. Isomerization of the intersubunit disulfide bond to an SU intrachain disulfide bond is thought to occur upon receptor recognition in order to allow membrane fusion. The transmembrane protein is palmitoylated. In terms of processing, the R-peptide is palmitoylated.

It is found in the virion membrane. The protein resides in the host cell membrane. Functionally, the surface protein (SU) attaches the virus to the host cell by binding to its receptor. This interaction triggers the refolding of the transmembrane protein (TM) and is thought to activate its fusogenic potential by unmasking its fusion peptide. Fusion occurs at the host cell plasma membrane. The transmembrane protein (TM) acts as a class I viral fusion protein. Under the current model, the protein has at least 3 conformational states: pre-fusion native state, pre-hairpin intermediate state, and post-fusion hairpin state. During viral and target cell membrane fusion, the coiled coil regions (heptad repeats) assume a trimer-of-hairpins structure, positioning the fusion peptide in close proximity to the C-terminal region of the ectodomain. The formation of this structure appears to drive apposition and subsequent fusion of viral and target cell membranes. Membranes fusion leads to delivery of the nucleocapsid into the cytoplasm. The sequence is that of Envelope glycoprotein (env) from Mus musculus (Mouse).